The chain runs to 124 residues: Large ribosomal subunit protein eL31 (124 aa).

Belongs to the eukaryotic ribosomal protein eL31 family.

This chain is Large ribosomal subunit protein eL31 (RpL31), found in Spodoptera frugiperda (Fall armyworm).